The sequence spans 331 residues: Ornithine carbamoyltransferase (331 aa).

Carbamoyl phosphate-binding positions include 55 to 58 (STRT), glutamine 82, arginine 106, and 133 to 136 (HPTQ). L-ornithine contacts are provided by residues asparagine 166, aspartate 230, and 234 to 235 (SM). Carbamoyl phosphate-binding positions include 272 to 273 (CL) and arginine 317.

The protein belongs to the aspartate/ornithine carbamoyltransferase superfamily. OTCase family.

The protein resides in the cytoplasm. It carries out the reaction carbamoyl phosphate + L-ornithine = L-citrulline + phosphate + H(+). Its pathway is amino-acid biosynthesis; L-arginine biosynthesis; L-arginine from L-ornithine and carbamoyl phosphate: step 1/3. Functionally, reversibly catalyzes the transfer of the carbamoyl group from carbamoyl phosphate (CP) to the N(epsilon) atom of ornithine (ORN) to produce L-citrulline. In Neisseria meningitidis serogroup A / serotype 4A (strain DSM 15465 / Z2491), this protein is Ornithine carbamoyltransferase (argF).